The primary structure comprises 273 residues: Dermonecrotic toxin LdSicTox-alphaIB1aiv (273 aa).

His5 is a catalytic residue. Mg(2+)-binding residues include Glu25 and Asp27. His41 (nucleophile) is an active-site residue. 2 disulfides stabilise this stretch: Cys45–Cys51 and Cys47–Cys190. Asp85 provides a ligand contact to Mg(2+). The N-linked (GlcNAc...) asparagine glycan is linked to Asn250.

Belongs to the arthropod phospholipase D family. Class II subfamily. It depends on Mg(2+) as a cofactor. Expressed by the venom gland.

It localises to the secreted. It catalyses the reaction an N-(acyl)-sphingosylphosphocholine = an N-(acyl)-sphingosyl-1,3-cyclic phosphate + choline. The catalysed reaction is an N-(acyl)-sphingosylphosphoethanolamine = an N-(acyl)-sphingosyl-1,3-cyclic phosphate + ethanolamine. It carries out the reaction a 1-acyl-sn-glycero-3-phosphocholine = a 1-acyl-sn-glycero-2,3-cyclic phosphate + choline. The enzyme catalyses a 1-acyl-sn-glycero-3-phosphoethanolamine = a 1-acyl-sn-glycero-2,3-cyclic phosphate + ethanolamine. In terms of biological role, dermonecrotic toxins cleave the phosphodiester linkage between the phosphate and headgroup of certain phospholipids (sphingolipid and lysolipid substrates), forming an alcohol (often choline) and a cyclic phosphate. This toxin acts on sphingomyelin (SM). It may also act on ceramide phosphoethanolamine (CPE), lysophosphatidylcholine (LPC) and lysophosphatidylethanolamine (LPE), but not on lysophosphatidylserine (LPS), and lysophosphatidylglycerol (LPG). It acts by transphosphatidylation, releasing exclusively cyclic phosphate products as second products. Induces dermonecrosis, hemolysis, increased vascular permeability, edema, inflammatory response, and platelet aggregation. The chain is Dermonecrotic toxin LdSicTox-alphaIB1aiv from Loxosceles deserta (Desert recluse spider).